Consider the following 278-residue polypeptide: Tryptophan synthase alpha chain (278 aa).

Active-site proton acceptor residues include Glu50 and Asp61.

It belongs to the TrpA family. Tetramer of two alpha and two beta chains.

It carries out the reaction (1S,2R)-1-C-(indol-3-yl)glycerol 3-phosphate + L-serine = D-glyceraldehyde 3-phosphate + L-tryptophan + H2O. Its pathway is amino-acid biosynthesis; L-tryptophan biosynthesis; L-tryptophan from chorismate: step 5/5. Its function is as follows. The alpha subunit is responsible for the aldol cleavage of indoleglycerol phosphate to indole and glyceraldehyde 3-phosphate. The sequence is that of Tryptophan synthase alpha chain from Rhodopseudomonas palustris (strain HaA2).